The following is a 159-amino-acid chain: Flagellar assembly factor FliW (159 aa).

It belongs to the FliW family. As to quaternary structure, interacts with translational regulator CsrA and flagellin(s).

It is found in the cytoplasm. Functionally, acts as an anti-CsrA protein, binds CsrA and prevents it from repressing translation of its target genes, one of which is flagellin. Binds to flagellin and participates in the assembly of the flagellum. The sequence is that of Flagellar assembly factor FliW from Geobacter sulfurreducens (strain ATCC 51573 / DSM 12127 / PCA).